A 43-amino-acid chain; its full sequence is Defensin (43 aa).

Disulfide bonds link C3–C34, C20–C39, and C24–C41.

Its subcellular location is the secreted. Its function is as follows. Antibacterial peptide active against Gram-positive and Gram-negative bacteria. The polypeptide is Defensin (Palomena prasina (Green shield bug)).